The chain runs to 345 residues: NADH-ubiquinone oxidoreductase chain 2 (345 aa).

9 helical membrane passes run His-25 to Thr-45, Phe-60 to Leu-80, Thr-99 to Leu-119, Leu-149 to Asn-171, Ile-178 to Pro-198, Gln-199 to Leu-219, Ala-242 to Pro-262, Leu-282 to Leu-302, and Leu-324 to Leu-344.

This sequence belongs to the complex I subunit 2 family. In terms of assembly, core subunit of respiratory chain NADH dehydrogenase (Complex I) which is composed of 45 different subunits.

Its subcellular location is the mitochondrion inner membrane. It catalyses the reaction a ubiquinone + NADH + 5 H(+)(in) = a ubiquinol + NAD(+) + 4 H(+)(out). Its function is as follows. Core subunit of the mitochondrial membrane respiratory chain NADH dehydrogenase (Complex I) which catalyzes electron transfer from NADH through the respiratory chain, using ubiquinone as an electron acceptor. Essential for the catalytic activity and assembly of complex I. The polypeptide is NADH-ubiquinone oxidoreductase chain 2 (mt-nd2) (Xenopus laevis (African clawed frog)).